Consider the following 302-residue polypeptide: Protoheme IX farnesyltransferase 1 (302 aa).

Transmembrane regions (helical) follow at residues 27 to 47 (VVALMLVTAIVGMSLAPVTDF), 49 to 69 (WIQASIGLIGIGLMAGSAAAF), 98 to 118 (SVAIFAVAIGVVGFVLLYAWV), 121 to 141 (LTAWMTFLSLLGYAVVYTMYL), 149 to 169 (IVIAGIAGAMPPLLGWTAVTG), 175 to 195 (AWLLVMIIFIWTPPHFWALAI), 228 to 248 (LLTLVCVMPVLVGMVGFIYLF), and 281 to 301 (IYHLLALFVALLADHYIGMVL).

The protein belongs to the UbiA prenyltransferase family. Protoheme IX farnesyltransferase subfamily.

The protein resides in the cell inner membrane. It catalyses the reaction heme b + (2E,6E)-farnesyl diphosphate + H2O = Fe(II)-heme o + diphosphate. It participates in porphyrin-containing compound metabolism; heme O biosynthesis; heme O from protoheme: step 1/1. Its function is as follows. Converts heme B (protoheme IX) to heme O by substitution of the vinyl group on carbon 2 of heme B porphyrin ring with a hydroxyethyl farnesyl side group. The protein is Protoheme IX farnesyltransferase 1 of Vibrio parahaemolyticus serotype O3:K6 (strain RIMD 2210633).